A 283-amino-acid chain; its full sequence is uncharacterized protein (283 aa).

5 consecutive transmembrane segments (helical) span residues 8 to 28, 38 to 58, 73 to 93, 100 to 120, and 175 to 195; these read LILSIVGNILLGLIKIIIGYV, GIHSLSDVITSIIGIIGVKIA, FECLFSFFIGLALFFTAYEIG, IIYGEVIEVNAIMVGVAILSI, and AIAGIIVALMIAKVAFDICLT.

The protein belongs to the cation diffusion facilitator (CDF) transporter (TC 2.A.4) family.

The protein resides in the cell membrane. This is an uncharacterized protein from Methanocaldococcus jannaschii (strain ATCC 43067 / DSM 2661 / JAL-1 / JCM 10045 / NBRC 100440) (Methanococcus jannaschii).